Reading from the N-terminus, the 254-residue chain is Thiazole synthase (254 aa).

Lysine 96 serves as the catalytic Schiff-base intermediate with DXP. Residues glycine 157, 183-184 (AG), and 205-206 (NT) each bind 1-deoxy-D-xylulose 5-phosphate.

It belongs to the ThiG family. Homotetramer. Forms heterodimers with either ThiH or ThiS.

The protein localises to the cytoplasm. It catalyses the reaction [ThiS sulfur-carrier protein]-C-terminal-Gly-aminoethanethioate + 2-iminoacetate + 1-deoxy-D-xylulose 5-phosphate = [ThiS sulfur-carrier protein]-C-terminal Gly-Gly + 2-[(2R,5Z)-2-carboxy-4-methylthiazol-5(2H)-ylidene]ethyl phosphate + 2 H2O + H(+). Its pathway is cofactor biosynthesis; thiamine diphosphate biosynthesis. Functionally, catalyzes the rearrangement of 1-deoxy-D-xylulose 5-phosphate (DXP) to produce the thiazole phosphate moiety of thiamine. Sulfur is provided by the thiocarboxylate moiety of the carrier protein ThiS. In vitro, sulfur can be provided by H(2)S. In Clostridium perfringens (strain SM101 / Type A), this protein is Thiazole synthase.